The chain runs to 92 residues: Small ribosomal subunit protein bS20 (92 aa).

Belongs to the bacterial ribosomal protein bS20 family.

Its function is as follows. Binds directly to 16S ribosomal RNA. The polypeptide is Small ribosomal subunit protein bS20 (Thermosipho africanus (strain TCF52B)).